The chain runs to 622 residues: Polypeptide N-acetylgalactosaminyltransferase 6 (622 aa).

At 1-8 (MRLLRRRH) the chain is on the cytoplasmic side. A helical; Signal-anchor for type II membrane protein transmembrane segment spans residues 9–28 (MPLRLAMVGCAFVLFLFLLH). The Lumenal portion of the chain corresponds to 29 to 622 (RDVSSREEAT…SDPHQLWLFV (594 aa)). Asn-86 carries an N-linked (GlcNAc...) asparagine glycan. Cystine bridges form between Cys-165–Cys-402 and Cys-393–Cys-474. The tract at residues 176-285 (LATTSVIIVF…HGWLEPLLAR (110 aa)) is catalytic subdomain A. Mn(2+) contacts are provided by Asp-269, His-271, and His-407. The tract at residues 348–410 (PIKSPTFAGG…PCSVVGHVFR (63 aa)) is catalytic subdomain B. N-linked (GlcNAc...) asparagine glycosylation occurs at Asn-476. The Ricin B-type lectin domain maps to 506–622 (TNQCLDVGEN…SDPHQLWLFV (117 aa)). Cys-509 and Cys-527 form a disulfide bridge. UDP-N-acetyl-alpha-D-galactosamine is bound by residues Asp-511, Glu-514, His-528, and Asn-533. Cystine bridges form between Cys-553–Cys-566 and Cys-597–Cys-610.

Belongs to the glycosyltransferase 2 family. GalNAc-T subfamily. The cofactor is Mn(2+). In terms of tissue distribution, expressed in placenta and trachea. Weakly expressed in brain and pancreas. Expressed in fibroblast. Weakly or not expressed in lung, liver, muscle, kidney, spleen, thymus, prostate, testis, ovary, intestine, colon, leukocyte, stomach, thyroid, spinal cord, lymph node, trachea, adrenal gland and bone marrow.

It is found in the golgi apparatus membrane. It carries out the reaction L-seryl-[protein] + UDP-N-acetyl-alpha-D-galactosamine = a 3-O-[N-acetyl-alpha-D-galactosaminyl]-L-seryl-[protein] + UDP + H(+). The enzyme catalyses L-threonyl-[protein] + UDP-N-acetyl-alpha-D-galactosamine = a 3-O-[N-acetyl-alpha-D-galactosaminyl]-L-threonyl-[protein] + UDP + H(+). The protein operates within protein modification; protein glycosylation. Catalyzes the initial reaction in O-linked oligosaccharide biosynthesis, the transfer of an N-acetyl-D-galactosamine residue to a serine or threonine residue on the protein receptor. May participate in synthesis of oncofetal fibronectin. Has activity toward MUC1A, MUC2, EA2 and fibronectin peptides. Glycosylates FGF23. The chain is Polypeptide N-acetylgalactosaminyltransferase 6 (GALNT6) from Homo sapiens (Human).